We begin with the raw amino-acid sequence, 288 residues long: Phosphatidate cytidylyltransferase (288 aa).

The next 7 membrane-spanning stretches (helical) occupy residues 10–30 (IVLIAAVLCALFLFTPFYFAL), 52–72 (PLIRFFVTTFLGVFIFLWLYT), 89–109 (LLLINAVSWWGLALLLVISYP), 118–138 (NPLLQLLFAFSTLIPFVAGVL), 152–172 (GLFLLLYVFILVWAADSGAYF), 192–212 (WEGVIGGLITALVLAFIFIHF), and 223–243 (ITGFIILSVATVAISVLGDLT).

The protein belongs to the CDS family.

The protein resides in the cell inner membrane. The enzyme catalyses a 1,2-diacyl-sn-glycero-3-phosphate + CTP + H(+) = a CDP-1,2-diacyl-sn-glycerol + diphosphate. It functions in the pathway phospholipid metabolism; CDP-diacylglycerol biosynthesis; CDP-diacylglycerol from sn-glycerol 3-phosphate: step 3/3. This Haemophilus influenzae (strain ATCC 51907 / DSM 11121 / KW20 / Rd) protein is Phosphatidate cytidylyltransferase (cdsA).